The primary structure comprises 373 residues: Queuine tRNA-ribosyltransferase (373 aa).

The active-site Proton acceptor is Asp-90. Residues 90-94 (DSGGF), Asp-144, Gln-193, and Gly-220 contribute to the substrate site. Positions 251–257 (GVGTPED) are RNA binding. The active-site Nucleophile is Asp-270. Positions 275–279 (TRNAR) are RNA binding; important for wobble base 34 recognition. Positions 308, 310, 313, and 339 each coordinate Zn(2+).

Belongs to the queuine tRNA-ribosyltransferase family. As to quaternary structure, homodimer. Within each dimer, one monomer is responsible for RNA recognition and catalysis, while the other monomer binds to the replacement base PreQ1. It depends on Zn(2+) as a cofactor.

It catalyses the reaction 7-aminomethyl-7-carbaguanine + guanosine(34) in tRNA = 7-aminomethyl-7-carbaguanosine(34) in tRNA + guanine. Its pathway is tRNA modification; tRNA-queuosine biosynthesis. In terms of biological role, catalyzes the base-exchange of a guanine (G) residue with the queuine precursor 7-aminomethyl-7-deazaguanine (PreQ1) at position 34 (anticodon wobble position) in tRNAs with GU(N) anticodons (tRNA-Asp, -Asn, -His and -Tyr). Catalysis occurs through a double-displacement mechanism. The nucleophile active site attacks the C1' of nucleotide 34 to detach the guanine base from the RNA, forming a covalent enzyme-RNA intermediate. The proton acceptor active site deprotonates the incoming PreQ1, allowing a nucleophilic attack on the C1' of the ribose to form the product. After dissociation, two additional enzymatic reactions on the tRNA convert PreQ1 to queuine (Q), resulting in the hypermodified nucleoside queuosine (7-(((4,5-cis-dihydroxy-2-cyclopenten-1-yl)amino)methyl)-7-deazaguanosine). This chain is Queuine tRNA-ribosyltransferase, found in Campylobacter lari (strain RM2100 / D67 / ATCC BAA-1060).